A 249-amino-acid chain; its full sequence is Isoprenyl transferase 1 (249 aa).

D30 is a catalytic residue. D30 lines the Mg(2+) pocket. Substrate contacts are provided by residues 31 to 34, W35, R43, H47, and 75 to 77; these read GNGR and STE. The active-site Proton acceptor is N78. Substrate contacts are provided by residues W79, R81, R198, and 204 to 206; that span reads RMS. E217 contacts Mg(2+).

Belongs to the UPP synthase family. Homodimer. Requires Mg(2+) as cofactor.

Functionally, catalyzes the condensation of isopentenyl diphosphate (IPP) with allylic pyrophosphates generating different type of terpenoids. The protein is Isoprenyl transferase 1 of Tropheryma whipplei (strain Twist) (Whipple's bacillus).